Consider the following 361-residue polypeptide: Phospho-N-acetylmuramoyl-pentapeptide-transferase (361 aa).

10 consecutive transmembrane segments (helical) span residues 25-45, 73-93, 98-118, 139-159, 168-188, 200-220, 237-257, 264-284, 289-309, and 339-359; these read RGILAALTALFLSLWMGPAVI, TMGGSLILLTVTLSVLLWGDL, VWLVLAVMICFGAIGWYDDWI, IFGLAAGLFLYYTADVPAAIT, IALPLAGVSFVVIAYFWIVGF, GLAIMPTVLVACALGVFAYAS, AGELIIICSAIAGAGLGFLWF, VFMGDIGALSLGAVLGTIAVI, MVLVIMGGVFVIETLSVIIQV, and VIVRFWIISVVLVLIGLATLK.

The protein belongs to the glycosyltransferase 4 family. MraY subfamily. Mg(2+) serves as cofactor.

The protein localises to the cell inner membrane. It catalyses the reaction UDP-N-acetyl-alpha-D-muramoyl-L-alanyl-gamma-D-glutamyl-meso-2,6-diaminopimeloyl-D-alanyl-D-alanine + di-trans,octa-cis-undecaprenyl phosphate = di-trans,octa-cis-undecaprenyl diphospho-N-acetyl-alpha-D-muramoyl-L-alanyl-D-glutamyl-meso-2,6-diaminopimeloyl-D-alanyl-D-alanine + UMP. Its pathway is cell wall biogenesis; peptidoglycan biosynthesis. In terms of biological role, catalyzes the initial step of the lipid cycle reactions in the biosynthesis of the cell wall peptidoglycan: transfers peptidoglycan precursor phospho-MurNAc-pentapeptide from UDP-MurNAc-pentapeptide onto the lipid carrier undecaprenyl phosphate, yielding undecaprenyl-pyrophosphoryl-MurNAc-pentapeptide, known as lipid I. The sequence is that of Phospho-N-acetylmuramoyl-pentapeptide-transferase from Xanthomonas oryzae pv. oryzae (strain PXO99A).